The primary structure comprises 293 residues: Nucleotide-binding protein HRM2_27900 (293 aa).

An ATP-binding site is contributed by 11–18 (GLSGSGKS). 62–65 (DIRA) is a GTP binding site.

Belongs to the RapZ-like family.

Its function is as follows. Displays ATPase and GTPase activities. The sequence is that of Nucleotide-binding protein HRM2_27900 from Desulforapulum autotrophicum (strain ATCC 43914 / DSM 3382 / VKM B-1955 / HRM2) (Desulfobacterium autotrophicum).